The following is a 360-amino-acid chain: Phenylalanine--tRNA ligase alpha subunit (360 aa).

Glu-260 contacts Mg(2+).

Belongs to the class-II aminoacyl-tRNA synthetase family. Phe-tRNA synthetase alpha subunit type 1 subfamily. In terms of assembly, tetramer of two alpha and two beta subunits. Requires Mg(2+) as cofactor.

Its subcellular location is the cytoplasm. It catalyses the reaction tRNA(Phe) + L-phenylalanine + ATP = L-phenylalanyl-tRNA(Phe) + AMP + diphosphate + H(+). The sequence is that of Phenylalanine--tRNA ligase alpha subunit from Paracoccus denitrificans (strain Pd 1222).